The chain runs to 509 residues: Fumarate hydratase, mitochondrial (509 aa).

Residues M1–M43 constitute a mitochondrion transit peptide. Substrate contacts are provided by residues S144–T146, H175–D178, S185–N187, and T233. The Proton donor/acceptor role is filled by H234. S364 is a catalytic residue. Substrate contacts are provided by residues S365 and K370–N372.

This sequence belongs to the class-II fumarase/aspartase family. Fumarase subfamily. As to quaternary structure, homotetramer.

Its subcellular location is the mitochondrion. The protein localises to the cytoplasm. It is found in the cytosol. It localises to the nucleus. The protein resides in the chromosome. It carries out the reaction (S)-malate = fumarate + H2O. It functions in the pathway carbohydrate metabolism; tricarboxylic acid cycle; (S)-malate from fumarate: step 1/1. Its function is as follows. Catalyzes the reversible stereospecific interconversion of fumarate to L-malate. Experiments in other species have demonstrated that specific isoforms of this protein act in defined pathways and favor one direction over the other. In terms of biological role, catalyzes the hydration of fumarate to L-malate in the tricarboxylic acid (TCA) cycle to facilitate a transition step in the production of energy in the form of NADH. Functionally, catalyzes the dehydration of L-malate to fumarate. Fumarate metabolism in the cytosol plays a role during urea cycle and arginine metabolism; fumarate being a by-product of the urea cycle and amino-acid catabolism. Also plays a role in DNA repair by promoting non-homologous end-joining (NHEJ). In response to DNA damage translocates to the nucleus and accumulates at DNA double-strand breaks (DSBs): acts by catalyzing formation of fumarate. In Danio rerio (Zebrafish), this protein is Fumarate hydratase, mitochondrial.